The chain runs to 86 residues: Acyl carrier protein (86 aa).

The Carrier domain occupies 2-82 (ATVFERVKKV…AVVDYLKSKG (81 aa)). S37 carries the O-(pantetheine 4'-phosphoryl)serine modification.

Belongs to the acyl carrier protein (ACP) family. Post-translationally, 4'-phosphopantetheine is transferred from CoA to a specific serine of apo-ACP by AcpS. This modification is essential for activity because fatty acids are bound in thioester linkage to the sulfhydryl of the prosthetic group.

Its subcellular location is the cytoplasm. It functions in the pathway lipid metabolism; fatty acid biosynthesis. In terms of biological role, carrier of the growing fatty acid chain in fatty acid biosynthesis. The protein is Acyl carrier protein of Dehalococcoides mccartyi (strain ATCC BAA-2266 / KCTC 15142 / 195) (Dehalococcoides ethenogenes (strain 195)).